The sequence spans 657 residues: MPRGLILATPQLPPDGTPFSARYDDVYHSTEGGLAQAHHVFLGGNGLPGGWQGKRSFTIVETGFGQGLNFLATWAAWRDDPQRCGRLDFVSVEKHPFDRAGLALVHAQEGALASLAEALRQAWPVPVPGVHRLVFDAGRVTLTLMLGDAETLLPQLSCAADAFYLDGFSPAKNPDLWQPGVFKQLARIARGGATLATYTAAGAVRHGLREAGFEVRKAPGFGRKRDMTVAAFPTHWRTRRGPAEAPVWPERHAIVLGAGLAGCSVAERLAARGWRITLIDEHEAPAGGASAHRAAAMHPHVSIDDSVLSRLSRAGNLLARRHWEALDRAGFATGFHPTGVLQLAEHADDAAEQQRIVQALGFPADFIAWLDAARAADRVGAGVPQGGWWFAQAGWVAPPDICRAALAAAGEAVELRWRTRIESLLRHDAGWRACDAQGNVIAHAPVVVLANSLDAVRLAPLASAALKPVRGQLTDVPVAALEDGVPWPRAVVCGDGYLLPRERGAPTVRVGSSFQPGETDPDARTADHAANLRRLAGLQPAHAAALARVDPARLLGYVGVRCVSANRLPLIGAVADEAAIMAPGFRLRGPHAALPRVPGLYAALAYGSRGLTWSVLGAELLAAQIDGGPLPLESELAAALDPGRFLMRALRHGKHAA.

A tRNA (mnm(5)s(2)U34)-methyltransferase region spans residues 1-233; sequence MPRGLILATP…KRDMTVAAFP (233 aa). The FAD-dependent cmnm(5)s(2)U34 oxidoreductase stretch occupies residues 256–657; that stretch reads LGAGLAGCSV…RALRHGKHAA (402 aa).

This sequence in the N-terminal section; belongs to the methyltransferase superfamily. tRNA (mnm(5)s(2)U34)-methyltransferase family. The protein in the C-terminal section; belongs to the DAO family. FAD is required as a cofactor.

It localises to the cytoplasm. It carries out the reaction 5-aminomethyl-2-thiouridine(34) in tRNA + S-adenosyl-L-methionine = 5-methylaminomethyl-2-thiouridine(34) in tRNA + S-adenosyl-L-homocysteine + H(+). In terms of biological role, catalyzes the last two steps in the biosynthesis of 5-methylaminomethyl-2-thiouridine (mnm(5)s(2)U) at the wobble position (U34) in tRNA. Catalyzes the FAD-dependent demodification of cmnm(5)s(2)U34 to nm(5)s(2)U34, followed by the transfer of a methyl group from S-adenosyl-L-methionine to nm(5)s(2)U34, to form mnm(5)s(2)U34. The polypeptide is tRNA 5-methylaminomethyl-2-thiouridine biosynthesis bifunctional protein MnmC (Ralstonia nicotianae (strain ATCC BAA-1114 / GMI1000) (Ralstonia solanacearum)).